Consider the following 187-residue polypeptide: Ribosome-recycling factor (187 aa).

The protein belongs to the RRF family.

The protein localises to the cytoplasm. In terms of biological role, responsible for the release of ribosomes from messenger RNA at the termination of protein biosynthesis. May increase the efficiency of translation by recycling ribosomes from one round of translation to another. In Nitrobacter winogradskyi (strain ATCC 25391 / DSM 10237 / CIP 104748 / NCIMB 11846 / Nb-255), this protein is Ribosome-recycling factor.